A 355-amino-acid chain; its full sequence is Protein RecA (355 aa).

67-74 (GPESSGKT) is an ATP binding site.

This sequence belongs to the RecA family.

It is found in the cytoplasm. Can catalyze the hydrolysis of ATP in the presence of single-stranded DNA, the ATP-dependent uptake of single-stranded DNA by duplex DNA, and the ATP-dependent hybridization of homologous single-stranded DNAs. It interacts with LexA causing its activation and leading to its autocatalytic cleavage. The protein is Protein RecA of Shewanella piezotolerans (strain WP3 / JCM 13877).